A 479-amino-acid polypeptide reads, in one-letter code: U6 small nuclear RNA (adenine-(43)-N(6))-methyltransferase (479 aa).

S-adenosyl-L-methionine is bound by residues K82, G108, D131, T164, and N184. The interval 420 to 424 (DNASQ) is involved in dlc-1 binding.

It belongs to the methyltransferase superfamily. METTL16/RlmF family. Self-associates. Interacts with dlc-1; the interaction is direct, and is required for nuclear localization of mett-10. Expressed in the intestine, vulva, and cells of the somatic gonad including distal tip cells, gonadal sheath cells and spermatheca.

Its subcellular location is the nucleus. The enzyme catalyses an adenosine in mRNA + S-adenosyl-L-methionine = an N(6)-methyladenosine in mRNA + S-adenosyl-L-homocysteine + H(+). It carries out the reaction adenosine in U6 snRNA + S-adenosyl-L-methionine = N(6)-methyladenosine in U6 snRNA + S-adenosyl-L-homocysteine + H(+). In terms of biological role, RNA N6-methyltransferase that methylates adenosine residues at the N(6) position of a subset of RNAs and is involved in S-adenosyl-L-methionine homeostasis by regulating splicing of S-adenosylmethionine synthase transcripts (sams-3, sams-4 and sams-5). Able to N6-methylate a subset of mRNAs containing the 5'UACAGAAAC-3' nonamer sequence. Plays a key role in S-adenosyl-L-methionine homeostasis: under rich-diet conditions, catalyzes N6-methylation of S-adenosylmethionine synthase mRNAs (sams-3, sams-4 and sams-5), directly inhibiting splicing and protein production of S-adenosylmethionine synthase. In addition to mRNAs, also able to mediate N6-methylation of U6 small nuclear RNA (U6 snRNA). Required for gamete production, inhibiting germ cell proliferative fate and ensuring germ cell meiotic development. Also promotes progression of the mitotic cell cycle in those germ cells that continue to proliferate. Plays a role in the development of the vulva, somatic gonad and embryo. This chain is U6 small nuclear RNA (adenine-(43)-N(6))-methyltransferase, found in Caenorhabditis elegans.